The chain runs to 405 residues: Bifunctional enzyme IspD/IspF (405 aa).

The 2-C-methyl-D-erythritol 4-phosphate cytidylyltransferase stretch occupies residues 1-240; the sequence is MTLADKPVLS…KLLLDEPKYR (240 aa). Residues 240–405 form a 2-C-methyl-D-erythritol 2,4-cyclodiphosphate synthase region; the sequence is RVGTGYDIHR…LLYKIAPLHN (166 aa). The a divalent metal cation site is built by D246 and H248. 4-CDP-2-C-methyl-D-erythritol 2-phosphate contacts are provided by residues 246-248 and 277-278; these read DIH and HS. Residue H285 participates in a divalent metal cation binding. 4-CDP-2-C-methyl-D-erythritol 2-phosphate-binding positions include 299-301, 375-378, and R385; these read DIG and TTTE.

The protein in the N-terminal section; belongs to the IspD/TarI cytidylyltransferase family. IspD subfamily. This sequence in the C-terminal section; belongs to the IspF family. A divalent metal cation serves as cofactor.

The catalysed reaction is 2-C-methyl-D-erythritol 4-phosphate + CTP + H(+) = 4-CDP-2-C-methyl-D-erythritol + diphosphate. It catalyses the reaction 4-CDP-2-C-methyl-D-erythritol 2-phosphate = 2-C-methyl-D-erythritol 2,4-cyclic diphosphate + CMP. It functions in the pathway isoprenoid biosynthesis; isopentenyl diphosphate biosynthesis via DXP pathway; isopentenyl diphosphate from 1-deoxy-D-xylulose 5-phosphate: step 2/6. It participates in isoprenoid biosynthesis; isopentenyl diphosphate biosynthesis via DXP pathway; isopentenyl diphosphate from 1-deoxy-D-xylulose 5-phosphate: step 4/6. Its function is as follows. Bifunctional enzyme that catalyzes the formation of 4-diphosphocytidyl-2-C-methyl-D-erythritol from CTP and 2-C-methyl-D-erythritol 4-phosphate (MEP) (IspD), and catalyzes the conversion of 4-diphosphocytidyl-2-C-methyl-D-erythritol 2-phosphate (CDP-ME2P) to 2-C-methyl-D-erythritol 2,4-cyclodiphosphate (ME-CPP) with a corresponding release of cytidine 5-monophosphate (CMP) (IspF). This chain is Bifunctional enzyme IspD/IspF, found in Wolbachia sp. subsp. Brugia malayi (strain TRS).